The chain runs to 306 residues: MKGTAMNGILPLYKPTGMTSADAVYHARKILGIKKIGHSGTLDPNVDGVLPLAIGAGTKAVPQLMASGKVYTGEITLGFATTTEDLDGEVVDKTPLTQPFTADQLDAALTAWTGNITQIPPMFSAVKVNGRRLYEYARAGETVKRPERQATVSQFTRTDEPVFSATDGTQRFRFEVHVSKGTYIRTLAVDVGKTLGVAAVMSQLTRVKSGGFTLKQAVSIEQLKAHAAAGTLADVIQPIDIAFADLPQVDLTVEQFEAISHGRFLSLDQQTPRVRLHFAGVLKAIYRREDDQYRPDLMFLANEKNV.

The active-site Nucleophile is the Asp-43.

It belongs to the pseudouridine synthase TruB family. Type 1 subfamily.

It catalyses the reaction uridine(55) in tRNA = pseudouridine(55) in tRNA. Its function is as follows. Responsible for synthesis of pseudouridine from uracil-55 in the psi GC loop of transfer RNAs. This Lacticaseibacillus casei (strain BL23) (Lactobacillus casei) protein is tRNA pseudouridine synthase B.